A 548-amino-acid chain; its full sequence is NAD(P)H-quinone oxidoreductase chain 4 (548 aa).

Helical transmembrane passes span 17 to 37 (VPWLSLSILVPIGGALLIPFI), 48 to 68 (WYALIVTLITFLITVAAYLTG), 103 to 123 (LILLTSFITSLACLAAWPVTF), 127 to 147 (LFFFLLLAMDGGQIAVFAVQD), 149 to 169 (LLFFLAWELELLPVYLLLAIW), 181 to 201 (FILYTAGSSLFILLAALAMGF), 222 to 242 (GFQLLCYAGLLIAFGVKLPIV), 256 to 276 (TAPVHMLLAGILLKMGGYALL), 290 to 310 (FAPLLIVLGVVNIIYAALTSF), 327 to 347 (MGFVLIGIGSFSVLGSSGAML), 348 to 368 (QMISHGLIGASLFFLVGATYD), 389 to 409 (FALWTVCALASLALPGMSGFV), 430 to 450 (VVICGLAAVGVVLTPVYLLSM), and 477 to 497 (VYIIGCLLVPIIGIGLYPRLM).

It belongs to the complex I subunit 4 family.

The protein resides in the cellular thylakoid membrane. The catalysed reaction is a plastoquinone + NADH + (n+1) H(+)(in) = a plastoquinol + NAD(+) + n H(+)(out). The enzyme catalyses a plastoquinone + NADPH + (n+1) H(+)(in) = a plastoquinol + NADP(+) + n H(+)(out). In terms of biological role, NDH-1 shuttles electrons from NAD(P)H, via FMN and iron-sulfur (Fe-S) centers, to quinones in the respiratory chain. The immediate electron acceptor for the enzyme in this species is believed to be plastoquinone. Couples the redox reaction to proton translocation (for every two electrons transferred, four hydrogen ions are translocated across the cytoplasmic membrane), and thus conserves the redox energy in a proton gradient. The protein is NAD(P)H-quinone oxidoreductase chain 4 of Synechococcus sp. (strain CC9902).